A 214-amino-acid polypeptide reads, in one-letter code: Single-pass membrane and coiled-coil domain-containing protein 1 (214 aa).

The stretch at 5–40 (TTTLISLKEAMKRVDNKLRALDTQFKELDVTKDNLT) forms a coiled coil. Residues 59–81 (IWTAALALGFTSMELNIVYSYVI) form a helical membrane-spanning segment. Positions 193-214 (KQAQDPENSRAPLKELMPPVKD) are disordered.

It localises to the membrane. This is Single-pass membrane and coiled-coil domain-containing protein 1 (Smco1) from Mus musculus (Mouse).